An 80-amino-acid polypeptide reads, in one-letter code: Acyl carrier protein (80 aa).

The region spanning 4–79 (DEIFSKVRSI…DVVNFIKKRK (76 aa)) is the Carrier domain. An O-(pantetheine 4'-phosphoryl)serine modification is found at Ser39.

Belongs to the acyl carrier protein (ACP) family. In terms of processing, 4'-phosphopantetheine is transferred from CoA to a specific serine of apo-ACP by AcpS. This modification is essential for activity because fatty acids are bound in thioester linkage to the sulfhydryl of the prosthetic group.

The protein localises to the cytoplasm. The protein operates within lipid metabolism; fatty acid biosynthesis. Functionally, carrier of the growing fatty acid chain in fatty acid biosynthesis. In Borrelia garinii subsp. bavariensis (strain ATCC BAA-2496 / DSM 23469 / PBi) (Borreliella bavariensis), this protein is Acyl carrier protein.